A 43-amino-acid polypeptide reads, in one-letter code: CGTNRAWCRNAKDHCCCGYSCVKPIWASKPEDDGYCWKKFGGC.

Disulfide bonds link Cys-1–Cys-16, Cys-8–Cys-21, Cys-15–Cys-36, and Cys-17–Cys-43.

Belongs to the neurotoxin 35 family. Post-translationally, contains 4 disulfide bonds. In terms of tissue distribution, expressed by the venom gland.

Its subcellular location is the secreted. Functionally, this toxin blocks the neuromuscular transmission, and also acts on muscle. It exerts an effect of first exciting and then inhibiting the contraction of muscle. This toxin is active only against mammals. This Macrothele raveni (Funnel-web spider) protein is U5-hexatoxin-Mr1a.